A 111-amino-acid polypeptide reads, in one-letter code: Nucleoid-associated protein lhv_0401 (111 aa).

It belongs to the YbaB/EbfC family. As to quaternary structure, homodimer.

It is found in the cytoplasm. The protein resides in the nucleoid. Functionally, binds to DNA and alters its conformation. May be involved in regulation of gene expression, nucleoid organization and DNA protection. In Lactobacillus helveticus (strain DPC 4571), this protein is Nucleoid-associated protein lhv_0401.